A 628-amino-acid polypeptide reads, in one-letter code: DNA ligase (628 aa).

Residues 36-40, 85-86, and glutamate 117 contribute to the NAD(+) site; these read DVEYD and SL. Lysine 119 serves as the catalytic N6-AMP-lysine intermediate. Residues arginine 140, glutamate 174, lysine 309, and lysine 333 each contribute to the NAD(+) site. The Zn(2+) site is built by cysteine 427, cysteine 430, cysteine 446, and cysteine 452.

Belongs to the NAD-dependent DNA ligase family. LigA subfamily. Mg(2+) serves as cofactor. Mn(2+) is required as a cofactor.

It carries out the reaction NAD(+) + (deoxyribonucleotide)n-3'-hydroxyl + 5'-phospho-(deoxyribonucleotide)m = (deoxyribonucleotide)n+m + AMP + beta-nicotinamide D-nucleotide.. Its function is as follows. DNA ligase that catalyzes the formation of phosphodiester linkages between 5'-phosphoryl and 3'-hydroxyl groups in double-stranded DNA using NAD as a coenzyme and as the energy source for the reaction. It is essential for DNA replication and repair of damaged DNA. The chain is DNA ligase from Tropheryma whipplei (strain Twist) (Whipple's bacillus).